The primary structure comprises 184 residues: Troponin I, slow skeletal muscle (184 aa).

Position 1 is an N-acetylproline; partial (Pro1). The tract at residues 1–45 (PEVERKSKITASRKLLKSLMLAKAKECQQEHEAREAEKVRYLAER) is involved in binding TNC. Residue Ser55 is modified to Phosphoserine. Residues 94–115 (LKLKVLDLRGKFKRPPLRRVRV) are involved in binding TNC and actin.

The protein belongs to the troponin I family. As to quaternary structure, binds to actin and tropomyosin. Post-translationally, in the muscle sample, approximately 25% of the chains were blocked. Pro-1 is probably acetylated. The N-terminus is blocked.

Troponin I is the inhibitory subunit of troponin, the thin filament regulatory complex which confers calcium-sensitivity to striated muscle actomyosin ATPase activity. This chain is Troponin I, slow skeletal muscle (TNNI1), found in Oryctolagus cuniculus (Rabbit).